The sequence spans 220 residues: Flavin-dependent thymidylate synthase (220 aa).

A ThyX domain is found at 1–208; that stretch reads MKIDILDKGF…PWTFEAFLKY (208 aa). FAD contacts are provided by residues T55, 78–80, and E86; that span reads RHR. DUMP-binding positions include 75–78, 86–90, and R147; these read QWFR and ELSGR. Residues 78–88 carry the ThyX motif motif; the sequence is RHRIASYNELS. Residues 163–165 and N169 each bind FAD; that span reads NAR. R174 contacts dUMP. Residue R174 is the Involved in ionization of N3 of dUMP, leading to its activation of the active site.

This sequence belongs to the thymidylate synthase ThyX family. In terms of assembly, homotetramer. The cofactor is FAD.

It catalyses the reaction dUMP + (6R)-5,10-methylene-5,6,7,8-tetrahydrofolate + NADPH + H(+) = dTMP + (6S)-5,6,7,8-tetrahydrofolate + NADP(+). It functions in the pathway pyrimidine metabolism; dTTP biosynthesis. Catalyzes the reductive methylation of 2'-deoxyuridine-5'-monophosphate (dUMP) to 2'-deoxythymidine-5'-monophosphate (dTMP) while utilizing 5,10-methylenetetrahydrofolate (mTHF) as the methyl donor, and NADPH and FADH(2) as the reductant. The protein is Flavin-dependent thymidylate synthase of Thermotoga sp. (strain RQ2).